Here is a 391-residue protein sequence, read N- to C-terminus: GTPase Obg (391 aa).

An Obg domain is found at 1–159; it reads MQFVDEATID…RRLRLELKVL (159 aa). The region spanning 160-333 is the OBG-type G domain; that stretch reads ADVGLLGMPN…LVYALMNAIE (174 aa). Residues 166 to 173, 191 to 195, 213 to 216, 283 to 286, and 314 to 316 each bind GTP; these read GMPNAGKS, FTTLI, DIPG, NKID, and SAA. Residues Ser173 and Thr193 each coordinate Mg(2+). Over residues 367 to 377 the composition is skewed to basic and acidic residues; sequence LKAEARQARQN. The segment at 367-391 is disordered; that stretch reads LKAEARQARQNDDDDDHDVEVVYEP. The span at 378-391 shows a compositional bias: acidic residues; sequence DDDDDHDVEVVYEP.

It belongs to the TRAFAC class OBG-HflX-like GTPase superfamily. OBG GTPase family. Monomer. Mg(2+) serves as cofactor.

It localises to the cytoplasm. Its function is as follows. An essential GTPase which binds GTP, GDP and possibly (p)ppGpp with moderate affinity, with high nucleotide exchange rates and a fairly low GTP hydrolysis rate. Plays a role in control of the cell cycle, stress response, ribosome biogenesis and in those bacteria that undergo differentiation, in morphogenesis control. The protein is GTPase Obg of Alcanivorax borkumensis (strain ATCC 700651 / DSM 11573 / NCIMB 13689 / SK2).